We begin with the raw amino-acid sequence, 154 residues long: Low molecular weight protein-tyrosine-phosphatase PtpA (154 aa).

The active-site Nucleophile is the Cys8. Residue Arg14 is part of the active site. The active-site Proton donor is Asp120.

This sequence belongs to the low molecular weight phosphotyrosine protein phosphatase family.

It catalyses the reaction O-phospho-L-tyrosyl-[protein] + H2O = L-tyrosyl-[protein] + phosphate. Functionally, dephosphorylates the phosphotyrosine-containing proteins. The sequence is that of Low molecular weight protein-tyrosine-phosphatase PtpA (ptpA) from Staphylococcus epidermidis (strain ATCC 35984 / DSM 28319 / BCRC 17069 / CCUG 31568 / BM 3577 / RP62A).